The chain runs to 444 residues: Methylenetetrahydrofolate--tRNA-(uracil-5-)-methyltransferase TrmFO (444 aa).

Residue 9 to 14 (GAGMAG) participates in FAD binding.

It belongs to the MnmG family. TrmFO subfamily. Requires FAD as cofactor.

The protein localises to the cytoplasm. The catalysed reaction is uridine(54) in tRNA + (6R)-5,10-methylene-5,6,7,8-tetrahydrofolate + NADH + H(+) = 5-methyluridine(54) in tRNA + (6S)-5,6,7,8-tetrahydrofolate + NAD(+). The enzyme catalyses uridine(54) in tRNA + (6R)-5,10-methylene-5,6,7,8-tetrahydrofolate + NADPH + H(+) = 5-methyluridine(54) in tRNA + (6S)-5,6,7,8-tetrahydrofolate + NADP(+). In terms of biological role, catalyzes the folate-dependent formation of 5-methyl-uridine at position 54 (M-5-U54) in all tRNAs. This chain is Methylenetetrahydrofolate--tRNA-(uracil-5-)-methyltransferase TrmFO, found in Cereibacter sphaeroides (strain ATCC 17023 / DSM 158 / JCM 6121 / CCUG 31486 / LMG 2827 / NBRC 12203 / NCIMB 8253 / ATH 2.4.1.) (Rhodobacter sphaeroides).